The primary structure comprises 95 residues: MKFAAIFLVTCVFFSLFSSNLSQGEKLSMDPTRRPWCPSKKQMFGGNCGNDGDSLCLMLLAASWDESLRHSSISCNCTTYPNYKILCSCPNMICP.

A signal peptide spans 1-24 (MKFAAIFLVTCVFFSLFSSNLSQG). 4 disulfide bridges follow: Cys-37-Cys-94, Cys-48-Cys-77, Cys-56-Cys-87, and Cys-75-Cys-89.

It belongs to the DEFL family.

Its subcellular location is the secreted. The polypeptide is Defensin-like protein 247 (SCRL6) (Arabidopsis thaliana (Mouse-ear cress)).